A 1368-amino-acid polypeptide reads, in one-letter code: DNA-directed RNA polymerase subunit beta (1368 aa).

Belongs to the RNA polymerase beta chain family. As to quaternary structure, the RNAP catalytic core consists of 2 alpha, 1 beta, 1 beta' and 1 omega subunit. When a sigma factor is associated with the core the holoenzyme is formed, which can initiate transcription.

It carries out the reaction RNA(n) + a ribonucleoside 5'-triphosphate = RNA(n+1) + diphosphate. Functionally, DNA-dependent RNA polymerase catalyzes the transcription of DNA into RNA using the four ribonucleoside triphosphates as substrates. The chain is DNA-directed RNA polymerase subunit beta from Syntrophotalea carbinolica (strain DSM 2380 / NBRC 103641 / GraBd1) (Pelobacter carbinolicus).